A 261-amino-acid polypeptide reads, in one-letter code: MTYNPRIGGFTHVKQASFDVHVKRGEAQPRTSFAQQIKRIFSKIGETLGQLFRHRAPDSAPGRVRLQGVRYVGSYRPTGDAKQAIRHFVDEAVKQVAHTRTPEIRQDAEFGRQVYEATLCAIFSEAKDRFCMDPATRAGNVRPAFIEALGDAARATGLPGADKQGVFTPSGAGTNPLYTEIRLRADTLMGAELAARPEYRELQPYARQQAIDLVANALPAERSNTLVEFRQTVQTLEATYRRAAQDASRDEKGATNAADGA.

The protein belongs to the GEF (guanine exchange factor) SopE family. As to quaternary structure, monomer. Interacts with human CDC42.

The protein resides in the secreted. Functionally, activator for both CDC42 and RAC1 by directly interacting with these Rho GTPases and acting as a guanine nucleotide exchange factor (GEF). This activation results in actin cytoskeleton rearrangements and stimulates membrane ruffling, thus promoting bacterial entry into non-phagocytic cells. This is Guanine nucleotide exchange factor BopE (bopE) from Burkholderia mallei (strain NCTC 10247).